Consider the following 314-residue polypeptide: Protein ATP1B4 (314 aa).

Residues 1-17 (MATTAGEQANYLQSADS) show a composition bias toward polar residues. The segment at 1 to 37 (MATTAGEQANYLQSADSMSDGRQHHPEEAGEKKQEEQ) is disordered. Topologically, residues 1–69 (MATTAGEQAN…VLGRDKKSWA (69 aa)) are cytoplasmic. A compositionally biased stretch (basic and acidic residues) spans 19–37 (SDGRQHHPEEAGEKKQEEQ). A helical membrane pass occupies residues 70–90 (LILLFYFILYCFLAGLFALCI). Over 91–314 (YGLLATISPY…GRVAFTLHIG (224 aa)) the chain is Extracellular. A disulfide bond links cysteine 160 and cysteine 179. A glycan (N-linked (GlcNAc...) asparagine) is linked at asparagine 188. 2 disulfides stabilise this stretch: cysteine 189/cysteine 205 and cysteine 228/cysteine 287. Asparagine 264 carries an N-linked (GlcNAc...) asparagine glycan.

The protein belongs to the X(+)/potassium ATPases subunit beta family. Composed of two subunits: alpha (catalytic) and beta (accessory). Post-translationally, glycosylated. In terms of tissue distribution, expressed in skeletal muscle, liver, lung, kidney, heart, brain and skin.

Its subcellular location is the membrane. In terms of biological role, this is the non-catalytic component of the active enzyme, which catalyzes the hydrolysis of ATP coupled with the exchange of Na(+) and K(+) ions across the plasma membrane. In Xenopus laevis (African clawed frog), this protein is Protein ATP1B4 (atp1b4).